The sequence spans 434 residues: Gamma-glutamyl phosphate reductase (434 aa).

Belongs to the gamma-glutamyl phosphate reductase family.

Its subcellular location is the cytoplasm. It catalyses the reaction L-glutamate 5-semialdehyde + phosphate + NADP(+) = L-glutamyl 5-phosphate + NADPH + H(+). It functions in the pathway amino-acid biosynthesis; L-proline biosynthesis; L-glutamate 5-semialdehyde from L-glutamate: step 2/2. In terms of biological role, catalyzes the NADPH-dependent reduction of L-glutamate 5-phosphate into L-glutamate 5-semialdehyde and phosphate. The product spontaneously undergoes cyclization to form 1-pyrroline-5-carboxylate. This Nostoc sp. (strain PCC 7120 / SAG 25.82 / UTEX 2576) protein is Gamma-glutamyl phosphate reductase.